The primary structure comprises 266 residues: CD82 antigen (266 aa).

Residues 1–11 (MGAGCVKVTKY) lie on the Cytoplasmic side of the membrane. The S-palmitoyl cysteine moiety is linked to residue Cys5. Residues 12-32 (FLFLFNLLFFILGAVILGFGV) traverse the membrane as a helical segment. Over 33 to 53 (WILADKNSFISVLQTSSSSLQ) the chain is Extracellular. The helical transmembrane segment at 54–72 (VGAYVFIGVGAITIVMGFL) threads the bilayer. Residues 73 to 83 (GCIGAVNEVRC) are Cytoplasmic-facing. Cys74 carries the S-palmitoyl cysteine lipid modification. A helical transmembrane segment spans residues 84–110 (LLGLYFVFLLLILIAQVTVGVLFYFNA). Residues 111–227 (DKLKKEMGNT…KAQAWLQENF (117 aa)) lie on the Extracellular side of the membrane. Residues Asn127, Asn131, Asn157, and Asn197 are each glycosylated (N-linked (GlcNAc...) asparagine). A helical membrane pass occupies residues 228–249 (GILLGVCAGVAVIELLGLFLSI). Over 250–266 (CLCRYIHSEDYSKVPKY) the chain is Cytoplasmic.

This sequence belongs to the tetraspanin (TM4SF) family. As to quaternary structure, forms homooligomers. Interacts directly with IGSF8. Interacts with EGFR. Interacts with VEGFA and PDGFA. Interacts with ITGA4. Interacts with ITGA6; this interaction reduces ITGA6 cell surface expression. Interacts with ITGB1. Interacts with TLR4; this interaction inhibits TLR4-mediated signaling pathway. Interacts with TLR9. Interacts with PLAUR. In terms of processing, palmitoylated. Palmitoylation contributes to oligomerization and surface expression. In terms of tissue distribution, highest expression in the spleen and the kidney. Low expression in skeletal muscle and in the heart.

The protein resides in the cell membrane. Its subcellular location is the cytoplasmic vesicle. The protein localises to the phagosome. Functionally, structural component of specialized membrane microdomains known as tetraspanin-enriched microdomains (TERMs), which act as platforms for receptor clustering and signaling. Participates thereby in diverse biological functions such as cell signal transduction, adhesion, migration and protein trafficking. Acts as a attenuator of EGF signaling, facilitating ligand-induced endocytosis of the receptor and its subsequent desensitization. Mechanistically, modulates ligand-induced ubiquitination and trafficking of EGFR via E3 ligase CBL phosphorylation by PKC. Increases cell-matrix adhesion by regulating the membrane organization of integrin alpha4/ITA4. Modulates adhesion and suppresses cell migration through other integrins such as the alpha6/ITGA6 and beta1/ITGB1. Decreases cell-associated plasminogen activation by interfering with the interaction between urokinase-type plasminogen activator/PLAU and its receptor PLAUR. Associates with CD4 or CD8 and delivers costimulatory signals for the TCR/CD3 pathway. Plays a role in the restrains phagocyte migration but supports macrophage activation. Plays a role in TLR9 trafficking to acidified CpG-containing compartments by controlling interaction between TLR9 and VAMP3 and subsequent myddosome assembly. Inhibits LPS-induced inflammatory response by preventing binding of LPS to TLR4 on the cell surface. Plays a role in the activation of macrophages into anti-inflammatory phenotypes. Independently of Toll-like receptor (TLR) signaling, is recruited to pathogen-containing phagosomes prior to fusion with lysosomes and participates in antigen presentation. Also acts to control angiogenesis and switch angiogenic milieu to quiescent state by binding and sequestering VEGFA and PDGFA to inhibit the signaling they trigger via their respective cell surface receptor. The chain is CD82 antigen (Cd82) from Mus musculus (Mouse).